An 81-amino-acid chain; its full sequence is RNA-binding protein Hfq (81 aa).

The Sm domain maps to 10–69 (DPFLNTLRREHVPVSIYLVNGIKLQGQIESFDQYVVLLRNTVTQMVYKHAISTIVPGRAV).

This sequence belongs to the Hfq family. In terms of assembly, homohexamer.

In terms of biological role, RNA chaperone that binds small regulatory RNA (sRNAs) and mRNAs to facilitate mRNA translational regulation in response to envelope stress, environmental stress and changes in metabolite concentrations. Also binds with high specificity to tRNAs. The sequence is that of RNA-binding protein Hfq from Variovorax paradoxus (strain S110).